The sequence spans 880 residues: Alanine--tRNA ligase (880 aa).

This sequence belongs to the class-II aminoacyl-tRNA synthetase family.

It is found in the cytoplasm. The enzyme catalyses tRNA(Ala) + L-alanine + ATP = L-alanyl-tRNA(Ala) + AMP + diphosphate. Catalyzes the attachment of alanine to tRNA(Ala) in a two-step reaction: alanine is first activated by ATP to form Ala-AMP and then transferred to the acceptor end of tRNA(Ala). Also edits incorrectly charged Ser-tRNA(Ala) and Gly-tRNA(Ala) via its editing domain. The chain is Alanine--tRNA ligase (alaS) from Lactiplantibacillus plantarum (strain ATCC BAA-793 / NCIMB 8826 / WCFS1) (Lactobacillus plantarum).